Consider the following 564-residue polypeptide: Alpha-farnesene synthase (564 aa).

Mg(2+)-binding residues include Asp-313, Asp-317, Thr-464, and Glu-468. A DDXXD motif motif is present at residues 313–317 (DDVYD).

It belongs to the terpene synthase family. The cofactor is Mg(2+).

It catalyses the reaction (2E,6E)-farnesyl diphosphate = (3E,6E)-alpha-farnesene + diphosphate. Catalyzes the cyclization of farnesyl diphosphate to (E,E)-alpha-farnesene. The polypeptide is Alpha-farnesene synthase (TPS7) (Ricinus communis (Castor bean)).